The primary structure comprises 525 residues: Ribonuclease Y (525 aa).

A helical transmembrane segment spans residues 3–23 (IFFISLVLIVLASVVFFVGGF). The KH domain maps to 215 to 300 (ALSVVHIQSD…KAYEDAKKEI (86 aa)). Residues 341-433 (LLQHSREVAM…VDAANVISLS (93 aa)) enclose the HD domain.

The protein belongs to the RNase Y family.

It is found in the cell membrane. Functionally, endoribonuclease that initiates mRNA decay. This chain is Ribonuclease Y, found in Chlorobium phaeobacteroides (strain DSM 266 / SMG 266 / 2430).